The primary structure comprises 166 residues: uncharacterized protein (166 aa).

This sequence to B.subtilis YpjQ.

This is an uncharacterized protein from Bacillus subtilis (strain 168).